Consider the following 338-residue polypeptide: tRNA N6-adenosine threonylcarbamoyltransferase (338 aa).

Positions 111 and 115 each coordinate Fe cation. Residues 134–138, Asp167, Gly180, Asp184, and Asn272 each bind substrate; that span reads VVSGG. Residue Asp300 participates in Fe cation binding.

Belongs to the KAE1 / TsaD family. It depends on Fe(2+) as a cofactor.

Its subcellular location is the cytoplasm. It carries out the reaction L-threonylcarbamoyladenylate + adenosine(37) in tRNA = N(6)-L-threonylcarbamoyladenosine(37) in tRNA + AMP + H(+). Functionally, required for the formation of a threonylcarbamoyl group on adenosine at position 37 (t(6)A37) in tRNAs that read codons beginning with adenine. Is involved in the transfer of the threonylcarbamoyl moiety of threonylcarbamoyl-AMP (TC-AMP) to the N6 group of A37, together with TsaE and TsaB. TsaD likely plays a direct catalytic role in this reaction. In Syntrophus aciditrophicus (strain SB), this protein is tRNA N6-adenosine threonylcarbamoyltransferase.